Reading from the N-terminus, the 192-residue chain is N-terminal acetyltransferase A complex catalytic subunit NAA10 (192 aa).

The N-acetyltransferase domain occupies 2-152 (VCIRRATVDD…DAYDMRKNLK (151 aa)).

This sequence belongs to the acetyltransferase family. ARD1 subfamily. Part of the NatA complex. Interacts with NAA15. As to expression, expressed in leaves, roots, shoots and flowers.

It catalyses the reaction N-terminal glycyl-[protein] + acetyl-CoA = N-terminal N(alpha)-acetylglycyl-[protein] + CoA + H(+). The catalysed reaction is N-terminal L-alanyl-[protein] + acetyl-CoA = N-terminal N(alpha)-acetyl-L-alanyl-[protein] + CoA + H(+). It carries out the reaction N-terminal L-seryl-[protein] + acetyl-CoA = N-terminal N(alpha)-acetyl-L-seryl-[protein] + CoA + H(+). The enzyme catalyses N-terminal L-valyl-[protein] + acetyl-CoA = N-terminal N(alpha)-acetyl-L-valyl-[protein] + CoA + H(+). It catalyses the reaction N-terminal L-cysteinyl-[protein] + acetyl-CoA = N-terminal N(alpha)-acetyl-L-cysteinyl-[protein] + CoA + H(+). The catalysed reaction is N-terminal L-threonyl-[protein] + acetyl-CoA = N-terminal N(alpha)-acetyl-L-threonyl-[protein] + CoA + H(+). Catalytic subunit of the NatA N-alpha-acetyltransferase complex. Required for male gametocyte development, embryogenesis, suspensor development and the formation of the quiescent center (QC) in the root meristem. Involved in plant immunity through the regulation of SNC1 and RPM1 stability. The sequence is that of N-terminal acetyltransferase A complex catalytic subunit NAA10 from Arabidopsis thaliana (Mouse-ear cress).